The primary structure comprises 293 residues: Insulin-like growth factor-binding protein 3 (293 aa).

Residues 1-27 (MQRARPALWAAALIALALLRGPPAARA) form the signal peptide. Residues 36–119 (PVVRCEPCDA…LDGRGICANA (84 aa)) enclose the IGFBP N-terminal domain. Cystine bridges form between C40-C69, C43-C71, C51-C72, C60-C75, C83-C96, and C90-C116. N118 and N138 each carry an N-linked (GlcNAc...) asparagine glycan. Disordered stretches follow at residues 132–166 (APPAPGNGSESEEDRSVDSMENQALPSTHRVPDSK) and 178–213 (KKGHAKDSQRYKVDYESQSTDTQNFSSESKRETEYG). S150 is modified (phosphoserine). Over residues 178 to 192 (KKGHAKDSQRYKVDY) the composition is skewed to basic and acidic residues. Positions 193 to 204 (ESQSTDTQNFSS) are enriched in polar residues. N-linked (GlcNAc...) asparagine glycosylation is present at N201. A Phosphoserine modification is found at S203. In terms of domain architecture, Thyroglobulin type-1 spans 212–287 (YGPCRREMED…DVKGKGDVHC (76 aa)). 3 disulfide bridges follow: C215/C242, C253/C264, and C266/C287.

As to quaternary structure, interacts with XLKD1. Binds IGF2 more than IGF1. Forms a ternary complex of about 140 to 150 kDa with IGF1 or IGF2 and a 85 kDa glycoprotein (ALS). Interacts with humanin; humanin competes with importin KPNB1 for binding to IGFBP3, blocking IGFBP3 nuclear import and IGFBP3-mediated apoptosis. Interacts with TMEM219. Interacts with RXRA; this interaction modulates the transcriptional activity of RXRA. Interacts with LRP1; this interaction mediates cell growth inhibition independent of IGF1. Post-translationally, phosphorylated by FAM20C in the extracellular medium. Phosphorylated by CK2; resulting in decreased nuclear localization.

The protein resides in the secreted. Its subcellular location is the nucleus. In terms of biological role, multifunctional protein that plays a critical role in regulating the availability of IGFs such as IGF1 and IGF2 to their receptors and thereby regulates IGF-mediated cellular processes including proliferation, differentiation, and apoptosis in a cell-type specific manner. Also exhibits IGF-independent antiproliferative and apoptotic effects mediated by its receptor TMEM219/IGFBP-3R. Inhibits the positive effect of humanin on insulin sensitivity. Promotes testicular germ cell apoptosis. Acts via LRP-1/alpha2M receptor, also known as TGF-beta type V receptor, to mediate cell growth inhibition independent of IGF1. Mechanistically, induces serine-specific dephosphorylation of IRS1 or IRS2 upon ligation to its receptor, leading to the inhibitory cascade. In the nucleus, interacts with transcription factors such as retinoid X receptor-alpha/RXRA to regulate transcriptional signaling and apoptosis. This chain is Insulin-like growth factor-binding protein 3 (IGFBP3), found in Sus scrofa (Pig).